Consider the following 368-residue polypeptide: DNA replication and repair protein RecF (368 aa).

30–37 (GDNGAGKT) is a binding site for ATP.

This sequence belongs to the RecF family.

Its subcellular location is the cytoplasm. The RecF protein is involved in DNA metabolism; it is required for DNA replication and normal SOS inducibility. RecF binds preferentially to single-stranded, linear DNA. It also seems to bind ATP. This chain is DNA replication and repair protein RecF, found in Xanthomonas oryzae pv. oryzae (strain KACC10331 / KXO85).